A 511-amino-acid polypeptide reads, in one-letter code: Glucans biosynthesis protein G (511 aa).

Positions 1-22 (MMKMRWLSAAVMLTLYTSSSWA) are cleaved as a signal peptide.

Belongs to the OpgD/OpgG family.

The protein localises to the periplasm. It functions in the pathway glycan metabolism; osmoregulated periplasmic glucan (OPG) biosynthesis. Involved in the biosynthesis of osmoregulated periplasmic glucans (OPGs). The protein is Glucans biosynthesis protein G of Escherichia coli O8 (strain IAI1).